Consider the following 161-residue polypeptide: 2-C-methyl-D-erythritol 2,4-cyclodiphosphate synthase (161 aa).

The a divalent metal cation site is built by Asp8 and His10. 4-CDP-2-C-methyl-D-erythritol 2-phosphate is bound by residues 8–10 and 34–35; these read DLH and HS. His42 serves as a coordination point for a divalent metal cation. 4-CDP-2-C-methyl-D-erythritol 2-phosphate contacts are provided by residues 56–58 and Arg142; that span reads DIG.

The protein belongs to the IspF family. As to quaternary structure, homotrimer. A divalent metal cation is required as a cofactor.

It catalyses the reaction 4-CDP-2-C-methyl-D-erythritol 2-phosphate = 2-C-methyl-D-erythritol 2,4-cyclic diphosphate + CMP. It functions in the pathway isoprenoid biosynthesis; isopentenyl diphosphate biosynthesis via DXP pathway; isopentenyl diphosphate from 1-deoxy-D-xylulose 5-phosphate: step 4/6. In terms of biological role, involved in the biosynthesis of isopentenyl diphosphate (IPP) and dimethylallyl diphosphate (DMAPP), two major building blocks of isoprenoid compounds. Catalyzes the conversion of 4-diphosphocytidyl-2-C-methyl-D-erythritol 2-phosphate (CDP-ME2P) to 2-C-methyl-D-erythritol 2,4-cyclodiphosphate (ME-CPP) with a corresponding release of cytidine 5-monophosphate (CMP). This is 2-C-methyl-D-erythritol 2,4-cyclodiphosphate synthase from Treponema denticola (strain ATCC 35405 / DSM 14222 / CIP 103919 / JCM 8153 / KCTC 15104).